A 279-amino-acid polypeptide reads, in one-letter code: Large ribosomal subunit protein uL2 (279 aa).

Disordered stretches follow at residues 1-59 (MGIR…GGHK) and 224-279 (VAMN…KNKR). Residues 50-59 (TTRHKGGGHK) are compositionally biased toward basic residues. Positions 253-268 (REGRTRRPNKESDKLI) are enriched in basic and acidic residues. The span at 269–279 (VRRRRTGKNKR) shows a compositional bias: basic residues.

This sequence belongs to the universal ribosomal protein uL2 family. In terms of assembly, part of the 50S ribosomal subunit. Forms a bridge to the 30S subunit in the 70S ribosome.

In terms of biological role, one of the primary rRNA binding proteins. Required for association of the 30S and 50S subunits to form the 70S ribosome, for tRNA binding and peptide bond formation. It has been suggested to have peptidyltransferase activity; this is somewhat controversial. Makes several contacts with the 16S rRNA in the 70S ribosome. This Pseudarthrobacter chlorophenolicus (strain ATCC 700700 / DSM 12829 / CIP 107037 / JCM 12360 / KCTC 9906 / NCIMB 13794 / A6) (Arthrobacter chlorophenolicus) protein is Large ribosomal subunit protein uL2.